The chain runs to 189 residues: UPF0149 protein VSAL_I2539 (189 aa).

Belongs to the UPF0149 family.

This Aliivibrio salmonicida (strain LFI1238) (Vibrio salmonicida (strain LFI1238)) protein is UPF0149 protein VSAL_I2539.